The sequence spans 66 residues: UPF0337 protein RPA4217 (66 aa).

The protein belongs to the UPF0337 (CsbD) family.

The chain is UPF0337 protein RPA4217 from Rhodopseudomonas palustris (strain ATCC BAA-98 / CGA009).